A 120-amino-acid chain; its full sequence is Seripauperin-20 (120 aa).

The helical transmembrane segment at 7 to 25 (IAAGVAAIAAGASATTTLA) threads the bilayer.

This sequence belongs to the SRP1/TIP1 family. Seripauperin subfamily.

Its subcellular location is the membrane. The chain is Seripauperin-20 (PAU20) from Saccharomyces cerevisiae (strain ATCC 204508 / S288c) (Baker's yeast).